Reading from the N-terminus, the 156-residue chain is Small ribosomal subunit protein bS6 (156 aa).

The tract at residues Gly98–Lys156 is disordered. Over residues Glu113–Ser135 the composition is skewed to basic and acidic residues. The span at Ser137–Ser147 shows a compositional bias: low complexity.

Belongs to the bacterial ribosomal protein bS6 family.

Binds together with bS18 to 16S ribosomal RNA. This is Small ribosomal subunit protein bS6 from Mycoplasmopsis synoviae (strain 53) (Mycoplasma synoviae).